Here is a 299-residue protein sequence, read N- to C-terminus: tRNA dimethylallyltransferase 2 (299 aa).

9–16 (GPTGVGKT) is a binding site for ATP. Substrate is bound at residue 11 to 16 (TGVGKT). Residues 34–37 (DSRQ) are interaction with substrate tRNA.

The protein belongs to the IPP transferase family. Monomer. Mg(2+) serves as cofactor.

The catalysed reaction is adenosine(37) in tRNA + dimethylallyl diphosphate = N(6)-dimethylallyladenosine(37) in tRNA + diphosphate. Catalyzes the transfer of a dimethylallyl group onto the adenine at position 37 in tRNAs that read codons beginning with uridine, leading to the formation of N6-(dimethylallyl)adenosine (i(6)A). The polypeptide is tRNA dimethylallyltransferase 2 (Parabacteroides distasonis (strain ATCC 8503 / DSM 20701 / CIP 104284 / JCM 5825 / NCTC 11152)).